A 325-amino-acid chain; its full sequence is Putative ankyrin repeat protein RF_0011 (325 aa).

3 ANK repeats span residues 63 to 94, 99 to 130, and 134 to 164; these read NGNT…AINM, RGQP…NINA, and CGRT…EMII.

This is Putative ankyrin repeat protein RF_0011 from Rickettsia felis (strain ATCC VR-1525 / URRWXCal2) (Rickettsia azadi).